Reading from the N-terminus, the 353-residue chain is Peptide methionine sulfoxide reductase MsrA/MsrB (353 aa).

Positions 43 to 196 (REIYLAGGCF…PNGYCHIDIT (154 aa)) are peptide methionine sulfoxide reductase A. Residue Cys-51 is part of the active site. Residues 213 to 336 (DAELKAKLTP…NSASIKFIPL (124 aa)) enclose the MsrB domain. The active-site Nucleophile is Cys-325.

It in the N-terminal section; belongs to the MsrA Met sulfoxide reductase family. In the C-terminal section; belongs to the MsrB Met sulfoxide reductase family.

It catalyses the reaction L-methionyl-[protein] + [thioredoxin]-disulfide + H2O = L-methionyl-(S)-S-oxide-[protein] + [thioredoxin]-dithiol. The catalysed reaction is [thioredoxin]-disulfide + L-methionine + H2O = L-methionine (S)-S-oxide + [thioredoxin]-dithiol. It carries out the reaction L-methionyl-[protein] + [thioredoxin]-disulfide + H2O = L-methionyl-(R)-S-oxide-[protein] + [thioredoxin]-dithiol. Its function is as follows. Has an important function as a repair enzyme for proteins that have been inactivated by oxidation. Catalyzes the reversible oxidation-reduction of methionine sulfoxide in proteins to methionine. This chain is Peptide methionine sulfoxide reductase MsrA/MsrB (msrAB), found in Haemophilus influenzae (strain ATCC 51907 / DSM 11121 / KW20 / Rd).